The following is a 305-amino-acid chain: Ribonuclease BN (305 aa).

The Zn(2+) site is built by histidine 64, histidine 66, aspartate 68, histidine 69, histidine 141, aspartate 212, and histidine 270. The active-site Proton acceptor is aspartate 68.

It belongs to the RNase Z family. RNase BN subfamily. As to quaternary structure, homodimer. Requires Zn(2+) as cofactor.

Zinc phosphodiesterase, which has both exoribonuclease and endoribonuclease activities. The chain is Ribonuclease BN from Escherichia coli O81 (strain ED1a).